A 289-amino-acid polypeptide reads, in one-letter code: 4-hydroxybenzoate octaprenyltransferase (289 aa).

Helical transmembrane passes span 33–53 (LWALWVAAPGLPPLWILAVFV), 99–119 (LFVVLVVLAFLLVLTLNTMTI), 141–161 (LPQVVLGAAFGWSIPMAFAAV), 163–183 (ESVPLSCWLMFLANILWAVAY), 213–233 (LIIGILQVAVLALMVVIGRLN), 238–258 (EFYWSVLVAGLLFAYQQKLIV), and 268–288 (AFLNNNYVGLVLFLGLAMSYW).

Belongs to the UbiA prenyltransferase family. The cofactor is Mg(2+).

It is found in the cell inner membrane. The enzyme catalyses all-trans-octaprenyl diphosphate + 4-hydroxybenzoate = 4-hydroxy-3-(all-trans-octaprenyl)benzoate + diphosphate. It participates in cofactor biosynthesis; ubiquinone biosynthesis. In terms of biological role, catalyzes the prenylation of para-hydroxybenzoate (PHB) with an all-trans polyprenyl group. Mediates the second step in the final reaction sequence of ubiquinone-8 (UQ-8) biosynthesis, which is the condensation of the polyisoprenoid side chain with PHB, generating the first membrane-bound Q intermediate 3-octaprenyl-4-hydroxybenzoate. The polypeptide is 4-hydroxybenzoate octaprenyltransferase (Enterobacter sp. (strain 638)).